The following is a 38-amino-acid chain: Potassium channel toxin alpha-KTx 3.8 (38 aa).

Disulfide bonds link Cys-8/Cys-28, Cys-14/Cys-33, and Cys-18/Cys-35. The segment at 26–33 (GKCMNGKC) is interaction with Ca(2+)-activated K(+) channels.

In terms of tissue distribution, expressed by the venom gland.

Its subcellular location is the secreted. Its function is as follows. Potassium channel inhibitor. This is Potassium channel toxin alpha-KTx 3.8 from Hottentotta tamulus sindicus (Scorpion).